The chain runs to 89 residues: Small ribosomal subunit protein uS15 (89 aa).

It belongs to the universal ribosomal protein uS15 family. As to quaternary structure, part of the 30S ribosomal subunit. Forms a bridge to the 50S subunit in the 70S ribosome, contacting the 23S rRNA.

Its function is as follows. One of the primary rRNA binding proteins, it binds directly to 16S rRNA where it helps nucleate assembly of the platform of the 30S subunit by binding and bridging several RNA helices of the 16S rRNA. Functionally, forms an intersubunit bridge (bridge B4) with the 23S rRNA of the 50S subunit in the ribosome. The chain is Small ribosomal subunit protein uS15 from Paramagnetospirillum magneticum (strain ATCC 700264 / AMB-1) (Magnetospirillum magneticum).